Consider the following 225-residue polypeptide: MAAEFNNDWDDLLKDEFEKEYYLNLRKFLINEYKTQKIHPSMYDIFNALKFTPYKDVKVVILGQDPYHGPNQAHGFSFSVKPGVQTPPSLRNMFKELNSDLGCYIPNNGFLESWAKQGILLLNTVLTVREGQANSHKGKGWEIFTDRVIELLNKREEPIVFILWGRNAISKEALITNSIHKIIKSVHPSPLSATRGFFGSKPFSKTNDFLVSINKEPIDWQIPNI.

D65 serves as the catalytic Proton acceptor.

The protein belongs to the uracil-DNA glycosylase (UDG) superfamily. UNG family.

The protein localises to the cytoplasm. The catalysed reaction is Hydrolyzes single-stranded DNA or mismatched double-stranded DNA and polynucleotides, releasing free uracil.. Excises uracil residues from the DNA which can arise as a result of misincorporation of dUMP residues by DNA polymerase or due to deamination of cytosine. This is Uracil-DNA glycosylase from Clostridium perfringens (strain ATCC 13124 / DSM 756 / JCM 1290 / NCIMB 6125 / NCTC 8237 / Type A).